The chain runs to 320 residues: MARSKIALIGAGQIGGTLAHLAGLKELGDVVLFDIVDGVPQGKALDIAESAPVDGFDAKYSGASDYSAIAGADVVIVTAGVPRKPGMSRDDLIGINLKVMEAVGAGIKEHAPDAFVICITNPLDAMVWALQKFSGLPTNKVVGMAGVLDSARFRHFLAEEFGVSVEDVTAFVLGGHGDDMVPLTRYSTVAGVPLTDLVKLGWTTQEKLDAMVERTRKGGGEIVNLLKTGSAFYAPAASAIAMAESYLRDKKRVLPCAAYLDGQYGIDGLYVGVPVVIGENGVERVLEVTFNDDEKAMFEKSVNSVKGLIEACKSVNDKLA.

NAD(+) is bound by residues 10 to 15 and D34; that span reads GAGQIG. Residues R83 and R89 each contribute to the substrate site. Residues N96 and 119 to 121 each bind NAD(+); that span reads ITN. The substrate site is built by N121 and R152. Residue H176 is the Proton acceptor of the active site.

Belongs to the LDH/MDH superfamily. MDH type 3 family.

The catalysed reaction is (S)-malate + NAD(+) = oxaloacetate + NADH + H(+). Its function is as follows. Catalyzes the reversible oxidation of malate to oxaloacetate. The protein is Malate dehydrogenase of Methylorubrum extorquens (strain CM4 / NCIMB 13688) (Methylobacterium extorquens).